An 89-amino-acid chain; its full sequence is Small ribosomal subunit protein uS15 (89 aa).

A compositionally biased stretch (basic and acidic residues) spans 1–21 (MSIAAERKAEVIKTNARKDGD). Positions 1–24 (MSIAAERKAEVIKTNARKDGDTGS) are disordered.

This sequence belongs to the universal ribosomal protein uS15 family. Part of the 30S ribosomal subunit. Forms a bridge to the 50S subunit in the 70S ribosome, contacting the 23S rRNA.

One of the primary rRNA binding proteins, it binds directly to 16S rRNA where it helps nucleate assembly of the platform of the 30S subunit by binding and bridging several RNA helices of the 16S rRNA. In terms of biological role, forms an intersubunit bridge (bridge B4) with the 23S rRNA of the 50S subunit in the ribosome. This is Small ribosomal subunit protein uS15 from Rhodopseudomonas palustris (strain BisA53).